We begin with the raw amino-acid sequence, 349 residues long: Small ribosomal subunit biogenesis GTPase RsgA (349 aa).

Basic residues predominate over residues 1–11 (MSKKKLSKGQQ). The interval 1–29 (MSKKKLSKGQQRRVSANHQRRLKKTESKV) is disordered. A CP-type G domain is found at 102–272 (HSVLTRPDYY…VIDSPGVREF (171 aa)). GTP contacts are provided by residues 158–161 (NKID) and 212–220 (GQSGVGKSS). Positions 296, 301, 303, and 309 each coordinate Zn(2+).

Belongs to the TRAFAC class YlqF/YawG GTPase family. RsgA subfamily. Monomer. Associates with 30S ribosomal subunit, binds 16S rRNA. Zn(2+) serves as cofactor.

It localises to the cytoplasm. One of several proteins that assist in the late maturation steps of the functional core of the 30S ribosomal subunit. Helps release RbfA from mature subunits. May play a role in the assembly of ribosomal proteins into the subunit. Circularly permuted GTPase that catalyzes slow GTP hydrolysis, GTPase activity is stimulated by the 30S ribosomal subunit. The polypeptide is Small ribosomal subunit biogenesis GTPase RsgA (Pectobacterium atrosepticum (strain SCRI 1043 / ATCC BAA-672) (Erwinia carotovora subsp. atroseptica)).